Consider the following 383-residue polypeptide: S-adenosylmethionine synthase (383 aa).

His15 lines the ATP pocket. A Mg(2+)-binding site is contributed by Asp17. Glu43 is a binding site for K(+). Positions 56 and 99 each coordinate L-methionine. The flexible loop stretch occupies residues 99 to 109; it reads QSSDINQGVDR. Residues 164–166, 230–231, Asp239, 245–246, Ala262, and Lys266 contribute to the ATP site; these read DAK, RF, and RK. An L-methionine-binding site is contributed by Asp239. Residue Lys270 participates in L-methionine binding.

It belongs to the AdoMet synthase family. Homotetramer; dimer of dimers. The cofactor is Mg(2+). K(+) is required as a cofactor.

The protein resides in the cytoplasm. It catalyses the reaction L-methionine + ATP + H2O = S-adenosyl-L-methionine + phosphate + diphosphate. It functions in the pathway amino-acid biosynthesis; S-adenosyl-L-methionine biosynthesis; S-adenosyl-L-methionine from L-methionine: step 1/1. In terms of biological role, catalyzes the formation of S-adenosylmethionine (AdoMet) from methionine and ATP. The overall synthetic reaction is composed of two sequential steps, AdoMet formation and the subsequent tripolyphosphate hydrolysis which occurs prior to release of AdoMet from the enzyme. The polypeptide is S-adenosylmethionine synthase (Mannheimia succiniciproducens (strain KCTC 0769BP / MBEL55E)).